The chain runs to 402 residues: tRNA(Met) cytidine acetate ligase (402 aa).

ATP-binding positions include 7–20 (ITEY…HELH), glycine 102, asparagine 171, and arginine 196.

It belongs to the TmcAL family.

The protein resides in the cytoplasm. It carries out the reaction cytidine(34) in elongator tRNA(Met) + acetate + ATP = N(4)-acetylcytidine(34) in elongator tRNA(Met) + AMP + diphosphate. Its function is as follows. Catalyzes the formation of N(4)-acetylcytidine (ac(4)C) at the wobble position of elongator tRNA(Met), using acetate and ATP as substrates. First activates an acetate ion to form acetyladenylate (Ac-AMP) and then transfers the acetyl group to tRNA to form ac(4)C34. The sequence is that of tRNA(Met) cytidine acetate ligase from Clostridium perfringens (strain SM101 / Type A).